The following is a 197-amino-acid chain: Imidazoleglycerol-phosphate dehydratase (197 aa).

It belongs to the imidazoleglycerol-phosphate dehydratase family.

The protein localises to the cytoplasm. The catalysed reaction is D-erythro-1-(imidazol-4-yl)glycerol 3-phosphate = 3-(imidazol-4-yl)-2-oxopropyl phosphate + H2O. Its pathway is amino-acid biosynthesis; L-histidine biosynthesis; L-histidine from 5-phospho-alpha-D-ribose 1-diphosphate: step 6/9. The protein is Imidazoleglycerol-phosphate dehydratase of Rhodopseudomonas palustris (strain HaA2).